A 927-amino-acid polypeptide reads, in one-letter code: MNVFAHRCSSCRRAVVLWRPGLHRLYRTERGVYGYRPKISAGSQLQESSTRGKQAASPTVDHGLARLVTAYREHGHKAAKINPLFTGQAVMDMVPEIQEIMEILHGPFSTTGLLNMGKSEATIEEVLAYLDHTYCGQISIETSQLQNYKEREWFSRRFEELKQESFSTEERKHLARLMLECQEFDHFLATKFSTVKRYGGEGAESMMGFFHEMLKMCSFGGVTDVIIGMPHRGRLNLLTGLLQFPPELMFRKMRGLSEFPENSPSIGDVLSHLTSSVDLDFGSHRPLHVTMLPNPSHLEAINPVAVGKTRARQQSLSDGDYSTESSAQPGDKVVCLQVHGDASISGQGIVTETFTLSNLPHYRIGGSIHLIVNNQLGYTTPAERGRSSLYSSDVGKIVGCAVIHVNGDDPEEVLRATRLAVEYQRCFRKDVIIDLLCYRQWGHNELDEPFFTNPSMYKIIRSRKSIPDVYSERLIAEGLMTEEEATEIRTTYYSKFNDHLSNMTLYSPPSTNLQAHWREMIEPSARTTTWDTGLPADLLKFIGAKSVEVPEEFKMHSHLLKMHAQSRVQKLQEATKLDWATAEALAFGSLLCQGFNIRISGQDVGRGTFSQRHAMLVCQETNDTYIPLNHMTPDQKGFLEVSNSALSEEAVLGFEYGMSIESPKLLPIWEAQFGDFFNGAQIIFDTFISGGEAKWLLQSGIVILLPHGYDGAGPEHSSCRIERFLQMCDSTEEGVDGDTVNMFVVHPTTPAQYFHLLRRQMVRSFRKPLIVASPKMLLRYPAAVSSLEDIAPGKTFRSVIGDSSADPKSVSKVILCSGKHYYALHKQREALGEQGRSSAIIRVEELCPFPLEALQQEIHRYPKAKDFIWSQEEPQNMGAWTFVAPRFEKQLACKLRLVSRPALPAPAVGIGTLHQQQQEEITVKTLS.

This sequence belongs to the alpha-ketoglutarate dehydrogenase family. The 2-oxoadipate dehydrogenase complex is composed of OADH (2-oxoadipate dehydrogenase; E1a), DLST (dihydrolipoamide succinyltransferase; E2) and DLD (dihydrolipoamide dehydrogenase; E3). E1a functional unit is a dimer. Thiamine diphosphate serves as cofactor.

It is found in the mitochondrion. The enzyme catalyses N(6)-[(R)-lipoyl]-L-lysyl-[protein] + 2-oxoadipate + H(+) = N(6)-[(R)-S(8)-glutaryldihydrolipoyl]-L-lysyl-[protein] + CO2. The protein operates within amino-acid degradation. 2-oxoadipate dehydrogenase (E1a) component of the 2-oxoadipate dehydrogenase complex (OADHC). Participates in the first step, rate limiting for the overall conversion of 2-oxoadipate (alpha-ketoadipate) to glutaryl-CoA and CO(2) catalyzed by the whole OADHC. Catalyzes the irreversible decarboxylation of 2-oxoadipate via the thiamine diphosphate (ThDP) cofactor and subsequent transfer of the decarboxylated acyl intermediate on an oxidized dihydrolipoyl group that is covalently amidated to the E2 enzyme (dihydrolipoyllysine-residue succinyltransferase or DLST). Can catalyze the decarboxylation of 2-oxoglutarate in vitro, but at a much lower rate than 2-oxoadipate. Responsible for the last step of L-lysine, L-hydroxylysine and L-tryptophan catabolism with the common product being 2-oxoadipate. The protein is 2-oxoadipate dehydrogenase complex component E1 (dhtkd1) of Xenopus laevis (African clawed frog).